The primary structure comprises 784 residues: Toll-like receptor 2 (784 aa).

The signal sequence occupies residues methionine 1–glutamate 20. The Extracellular segment spans residues glycine 21–arginine 587. A disulfide bridge links cysteine 31 with cysteine 37. LRR repeat units lie at residues alanine 54–valine 77, asparagine 78–arginine 101, serine 102–serine 125, serine 126–threonine 150, asparagine 151–phenylalanine 175, leucine 176–asparagine 199, isoleucine 200–serine 223, leucine 224–leucine 250, isoleucine 251–glycine 278, valine 279–lysine 308, leucine 309–arginine 337, valine 338–serine 361, leucine 362–serine 388, leucine 389–asparagine 414, leucine 415–lysine 437, methionine 438–glutamine 457, threonine 458–glutamine 478, valine 479–methionine 500, and leucine 501–lysine 524. The N-linked (GlcNAc...) asparagine glycan is linked to asparagine 115. N-linked (GlcNAc...) asparagine glycosylation occurs at asparagine 199. Cysteine 353 and cysteine 382 form a disulfide bridge. An N-linked (GlcNAc...) asparagine glycan is attached at asparagine 414. Cysteine 432 and cysteine 454 are disulfide-bonded. A glycan (N-linked (GlcNAc...) asparagine) is linked at asparagine 442. The 55-residue stretch at leucine 525 to histidine 579 folds into the LRRCT domain. A helical transmembrane segment spans residues threonine 588–leucine 608. Residues cysteine 609–serine 784 are Cytoplasmic-facing. Residues isoleucine 639 to isoleucine 782 form the TIR domain. Lysine 754 is covalently cross-linked (Glycyl lysine isopeptide (Lys-Gly) (interchain with G-Cter in ubiquitin)). The ATG16L1-binding motif motif lies at tyrosine 761 to leucine 778.

It belongs to the Toll-like receptor family. As to quaternary structure, interacts with LY96, TLR1 and TLR6 (via extracellular domain). TLR2 seems to exist in heterodimers with either TLR1 or TLR6 before stimulation by the ligand. The heterodimers form bigger oligomers in response to their corresponding ligands as well as further heterotypic associations with other receptors such as CD14 and/or CD36. Binds MYD88 (via TIR domain). Interacts with TICAM1. Interacts with CNPY3. Interacts with ATG16L1. Interacts with PPP1R11. Interacts with TICAM2. Interacts with TIRAP. Post-translationally, ubiquitinated at Lys-754 by PPP1R11, leading to its degradation. Deubiquitinated by USP2. Glycosylation of Asn-442 is critical for secretion of the N-terminal ectodomain of TLR2.

The protein localises to the membrane. It localises to the cytoplasmic vesicle. It is found in the phagosome membrane. Its subcellular location is the membrane raft. Functionally, cooperates with LY96 to mediate the innate immune response to bacterial lipoproteins and other microbial cell wall components. Cooperates with TLR1 or TLR6 to mediate the innate immune response to bacterial lipoproteins or lipopeptides. Acts via MYD88 and TRAF6, leading to NF-kappa-B activation, cytokine secretion and the inflammatory response. May also promote apoptosis in response to lipoproteins. Forms activation clusters composed of several receptors depending on the ligand, these clusters trigger signaling from the cell surface and subsequently are targeted to the Golgi in a lipid-raft dependent pathway. Forms the cluster TLR2:TLR6:CD14:CD36 in response to diacylated lipopeptides and TLR2:TLR1:CD14 in response to triacylated lipopeptides. This Equus caballus (Horse) protein is Toll-like receptor 2 (TLR2).